The chain runs to 301 residues: Glycine--tRNA ligase alpha subunit (301 aa).

This sequence belongs to the class-II aminoacyl-tRNA synthetase family. Tetramer of two alpha and two beta subunits.

It localises to the cytoplasm. It carries out the reaction tRNA(Gly) + glycine + ATP = glycyl-tRNA(Gly) + AMP + diphosphate. In Campylobacter hominis (strain ATCC BAA-381 / DSM 21671 / CCUG 45161 / LMG 19568 / NCTC 13146 / CH001A), this protein is Glycine--tRNA ligase alpha subunit.